Here is a 730-residue protein sequence, read N- to C-terminus: MAGLWVGGSVLVAAGRRGSRSPRPLMRSVALWTLKHVPQYSRQRLLVSRSLCLAGYDSNEKTFDKILIANRGEIACRVIKTCKKMGIKTVAVHSDVDASSVHVTMADEAVCVGPAPTSKSYLNMDAIMEAVRTTRAQAVHPGYGFLSENKEFAKCLAAEGVIFIGPDTHAIQAMGDKIESKLLAKKAKVNTIPGFDGVVKDADEAVRIAREIGYPVMIKASAGGGGKGMRIAWDDEETRDGFRFSSQEAASSFGDDRLLIEKFIDNPRHIEIQVLGDKHGNALWLNERECSIQRRNQKVVEEAPSIFLDSETRRAMGEQAVALAKAVNYSSAGTVEFLVDSKKNFYFLEMNTRLQVEHPVTECITGLDLVQEMIRVAKGYPLRHRQADIPINGWAVECRVYAEDPYKSFGLPSIGRLSQYQEPIHLPGVRVDSGIQPGSDISIYYDPMISKLITYGSNRMEALKRMENALDNYVIRGVTHNIALLREVIINSRFVEGDINTKFLSDVYPDGFKGHKLTEDERNQLLAIASSLFVASQLRAQRFQEPENSRVPIIKPQVANWELSIRLHDEVHTVTASNSGPTFSVEVDGSKLNVTSTWNLASPLLSVSIDGTQRTIQCLSRDAGGNMSIQFLGTVYKVHILTKLAAELNKFMLEKAAEDTSSILHSPMPGVVVAVSVKPGDLVAEGQEICVIEAMKMQNSMTAGKTGKVKSVHCKAGDTVGEGDLLVELE.

The transit peptide at 1-52 (MAGLWVGGSVLVAAGRRGSRSPRPLMRSVALWTLKHVPQYSRQRLLVSRSLC) directs the protein to the mitochondrion. The Biotin carboxylation domain maps to 62–509 (TFDKILIANR…NTKFLSDVYP (448 aa)). Position 65 is an N6-acetyllysine; alternate (Lys-65). Lys-65 bears the N6-succinyllysine; alternate mark. Lys-119 carries the post-translational modification N6-succinyllysine. N6-acetyllysine; alternate is present on Lys-150. The residue at position 150 (Lys-150) is an N6-succinyllysine; alternate. The residue at position 154 (Lys-154) is an N6-acetyllysine. Lys-177 lines the ATP pocket. In terms of domain architecture, ATP-grasp spans 181 to 378 (KLLAKKAKVN…LVQEMIRVAK (198 aa)). Lys-188 is subject to N6-succinyllysine. Position 200 is an N6-acetyllysine; alternate (Lys-200). Residue Lys-200 is modified to N6-succinyllysine; alternate. ATP contacts are provided by residues 209–270 (AREI…PRHI), Glu-261, and Asn-296. Ser-252 is modified (phosphoserine). An N6-succinyllysine modification is found at Lys-262. Mg(2+) is bound by residues Glu-336, Glu-349, and Asn-351. Positions 336, 349, and 351 each coordinate Mn(2+). Residue Glu-349 is part of the active site. Position 407 is an N6-succinyllysine (Lys-407). A biotin-binding site is contributed by Phe-409. Lys-502, Lys-513, and Lys-650 each carry N6-succinyllysine. Residues 655-730 (KAAEDTSSIL…GEGDLLVELE (76 aa)) form the Biotinyl-binding domain. Lys-696 carries the post-translational modification N6-biotinyllysine.

The holoenzyme is a dodecamer composed of 6 PCCA/alpha subunits and 6 PCCB/beta subunits. Interacts (via the biotin carboxylation domain) with SIRT4. Interacts with SIRT3 and SIRT5. Mg(2+) serves as cofactor. It depends on Mn(2+) as a cofactor. Requires biotin as cofactor. Post-translationally, acetylated. In terms of processing, the biotin cofactor is covalently attached to the C-terminal biotinyl-binding domain and is required for the catalytic activity. Biotinylation is catalyzed by HLCS.

It localises to the mitochondrion matrix. The catalysed reaction is propanoyl-CoA + hydrogencarbonate + ATP = (S)-methylmalonyl-CoA + ADP + phosphate + H(+). It catalyses the reaction butanoyl-CoA + hydrogencarbonate + ATP = (2S)-ethylmalonyl-CoA + ADP + phosphate + H(+). The protein operates within metabolic intermediate metabolism; propanoyl-CoA degradation; succinyl-CoA from propanoyl-CoA: step 1/3. Its function is as follows. This is one of the 2 subunits of the biotin-dependent propionyl-CoA carboxylase (PCC), a mitochondrial enzyme involved in the catabolism of odd chain fatty acids, branched-chain amino acids isoleucine, threonine, methionine, and valine and other metabolites. Propionyl-CoA carboxylase catalyzes the carboxylation of propionyl-CoA/propanoyl-CoA to D-methylmalonyl-CoA/(S)-methylmalonyl-CoA. Within the holoenzyme, the alpha subunit catalyzes the ATP-dependent carboxylation of the biotin carried by the biotin carboxyl carrier (BCC) domain, while the beta subunit then tranfers the carboxyl group from carboxylated biotin to propionyl-CoA. Propionyl-CoA carboxylase also significantly acts on butyryl-CoA/butanoyl-CoA, which is converted to ethylmalonyl-CoA/(2S)-ethylmalonyl-CoA at a much lower rate. Other alternative minor substrates include (2E)-butenoyl-CoA/crotonoyl-CoA. The polypeptide is Propionyl-CoA carboxylase alpha chain, mitochondrial (Sus scrofa (Pig)).